Reading from the N-terminus, the 326-residue chain is L-threo-3-hydroxyaspartate ammonia-lyase (326 aa).

The residue at position 53 (Lys53) is an N6-(pyridoxal phosphate)lysine. Pyridoxal 5'-phosphate-binding positions include Asn80, 179 to 183 (GGGGL), and Ser304.

This sequence belongs to the serine/threonine dehydratase family. Monomer. Requires pyridoxal 5'-phosphate as cofactor. Mn(2+) is required as a cofactor. The cofactor is Mg(2+). Ca(2+) serves as cofactor.

It catalyses the reaction (3S)-3-hydroxy-L-aspartate = oxaloacetate + NH4(+). Is strongly inhibited by hydroxylamine and EDTA in vitro. Functionally, catalyzes the deamination of L-threo-3-hydroxyaspartate to oxaloacetate and ammonia. Shows a high specificity towards L-threo-3-hydroxyaspartate as other 3-hydroxyaminoacids, i.e. D,L-erythro- and D-threo-3-hydroxyaspartate, D-threonine, L-threonine, D,L-allothreonine, D-serine, and L-serine, are not substrates for this enzyme. Exhibits no detectable serine racemase activity. Is responsible for the 3-hydroxyaspartate resistance of S.cerevisiae, and thus may be involved in the detoxification of naturally occurring 3-hydroxyaspartate. The polypeptide is L-threo-3-hydroxyaspartate ammonia-lyase (SRY1) (Saccharomyces cerevisiae (strain ATCC 204508 / S288c) (Baker's yeast)).